The sequence spans 188 residues: Elongation factor P (188 aa).

Belongs to the elongation factor P family.

The protein localises to the cytoplasm. It functions in the pathway protein biosynthesis; polypeptide chain elongation. Involved in peptide bond synthesis. Stimulates efficient translation and peptide-bond synthesis on native or reconstituted 70S ribosomes in vitro. Probably functions indirectly by altering the affinity of the ribosome for aminoacyl-tRNA, thus increasing their reactivity as acceptors for peptidyl transferase. The sequence is that of Elongation factor P from Mycoplasma mobile (strain ATCC 43663 / 163K / NCTC 11711) (Mesomycoplasma mobile).